A 141-amino-acid polypeptide reads, in one-letter code: MTQAFMSYEELLERAYSMLPRRRRRSTGERFVLPTFEVSKTGKKVYIHNFKDVAEKLNREPPVLLRFILKEIALPGVYENGTAVIHGEVSAQTLNKLLERFYNEYVKCPVCEAPDTILVKEKKLMYIKCTACGAVSPVKPF.

This sequence belongs to the eIF-2-beta/eIF-5 family. Heterotrimer composed of an alpha, a beta and a gamma chain.

Its function is as follows. eIF-2 functions in the early steps of protein synthesis by forming a ternary complex with GTP and initiator tRNA. This chain is Translation initiation factor 2 subunit beta, found in Thermofilum pendens (strain DSM 2475 / Hrk 5).